A 578-amino-acid chain; its full sequence is Keratin, type II cytoskeletal 1b (578 aa).

A head region spans residues 1–163 (MSHQFSSQSA…DPEIQRIKTQ (163 aa)). Position 95 is an omega-N-methylarginine (Arg-95). The tract at residues 164–200 (EREQIMVLNNKFASFIDKVRFLEQQNQVLQTKWELLQ) is coil 1A. The region spanning 164–477 (EREQIMVLNN…QLLEGEESRM (314 aa)) is the IF rod domain. Residues 201–219 (QVNTSTGTNNLEPLLENYI) are linker 1. The tract at residues 220–311 (GDLRRQVDLL…LFLTELSQVQ (92 aa)) is coil 1B. Positions 312 to 335 (THISDTNVILSMDNNRSLDLDSII) are linker 12. The tract at residues 336–474 (DAVRTQYELI…TYRQLLEGEE (139 aa)) is coil 2. The tail stretch occupies residues 475 to 578 (SRMSGELQSH…TNTSHRRILE (104 aa)). Arg-523 carries the post-translational modification Omega-N-methylarginine. Positions 547-556 (GSYGGSGRSG) are enriched in gly residues. The interval 547–578 (GSYGGSGRSGRGSSRVQIIQTSTNTSHRRILE) is disordered. Residues 562–571 (VQIIQTSTNT) show a composition bias toward polar residues.

The protein belongs to the intermediate filament family. In terms of processing, undergoes deimination of some arginine residues (citrullination). In terms of tissue distribution, expressed exclusively in skin.

This Homo sapiens (Human) protein is Keratin, type II cytoskeletal 1b (KRT77).